An 82-amino-acid chain; its full sequence is MKHLIFSSALVCALVVCTFAEEQVNVPFLPDERAVKCIGWQETCNGNLPCCNECVMCECNIMGQNCRCNHPKATNECESRRR.

The N-terminal stretch at 1–20 is a signal peptide; it reads MKHLIFSSALVCALVVCTFA. Residues 21–33 constitute a propeptide that is removed on maturation; that stretch reads EEQVNVPFLPDER. 5 disulfide bridges follow: cysteine 37–cysteine 51, cysteine 44–cysteine 57, cysteine 50–cysteine 68, cysteine 54–cysteine 77, and cysteine 59–cysteine 66. Serine 79 carries the O-palmitoyl serine lipid modification. Positions 80-82 are excised as a propeptide; the sequence is RRR.

The protein belongs to the neurotoxin 02 (plectoxin) family. 02 (plectoxin) subfamily. Plectoxin-5 presumably undergoes post-translational modification to give rise to plectoxin-6. In terms of tissue distribution, expressed by the venom gland.

Its subcellular location is the secreted. In terms of biological role, potent toxin that may paralyze and/or kill insect pests such as H.virescens (lepidoptera), S.exigua (beet armyworm) and M.sexta (tobacco hornworm). This is U1-plectoxin-Pt1a from Plectreurys tristis (Spider).